We begin with the raw amino-acid sequence, 358 residues long: Probable RNA methyltransferase MXAN_6459 (358 aa).

The Proton acceptor role is filled by glutamate 92. The Radical SAM core domain occupies 99–327 (FDEKYVICVS…PVARRYSGGK (229 aa)). A disulfide bridge connects residues cysteine 106 and cysteine 333. 3 residues coordinate [4Fe-4S] cluster: cysteine 113, cysteine 117, and cysteine 120. Residues 160–161 (GE), serine 192, 215–217 (SVT), and aspartate 289 each bind S-adenosyl-L-methionine. Cysteine 333 serves as the catalytic S-methylcysteine intermediate.

It belongs to the radical SAM superfamily. RlmN family. It depends on [4Fe-4S] cluster as a cofactor.

It is found in the cytoplasm. In Myxococcus xanthus (strain DK1622), this protein is Probable RNA methyltransferase MXAN_6459.